Reading from the N-terminus, the 1097-residue chain is DNA-directed RNA polymerase subunit beta (1097 aa).

Positions 1073–1097 (DVNPRRSTPSRPTYESLGVADYDED) are disordered.

Belongs to the RNA polymerase beta chain family. As to quaternary structure, in cyanobacteria the RNAP catalytic core is composed of 2 alpha, 1 beta, 1 beta', 1 gamma and 1 omega subunit. When a sigma factor is associated with the core the holoenzyme is formed, which can initiate transcription.

The catalysed reaction is RNA(n) + a ribonucleoside 5'-triphosphate = RNA(n+1) + diphosphate. In terms of biological role, DNA-dependent RNA polymerase catalyzes the transcription of DNA into RNA using the four ribonucleoside triphosphates as substrates. This chain is DNA-directed RNA polymerase subunit beta, found in Synechococcus sp. (strain RCC307).